The chain runs to 144 residues: uncharacterized protein (144 aa).

The helical transmembrane segment at 25 to 47 (LTLLDGCCVALVLALTAWSGFFV) threads the bilayer.

It is found in the membrane. This is an uncharacterized protein from Treponema pallidum (strain Nichols).